A 1073-amino-acid polypeptide reads, in one-letter code: Error-prone DNA polymerase (1073 aa).

The tract at residues 41 to 73 (EAEPECLSTPRPGPGSTEVPGERRGSRQGERSG) is disordered. The span at 60–73 (PGERRGSRQGERSG) shows a compositional bias: basic and acidic residues.

It belongs to the DNA polymerase type-C family. DnaE2 subfamily.

The protein localises to the cytoplasm. It catalyses the reaction DNA(n) + a 2'-deoxyribonucleoside 5'-triphosphate = DNA(n+1) + diphosphate. Its function is as follows. DNA polymerase involved in damage-induced mutagenesis and translesion synthesis (TLS). It is not the major replicative DNA polymerase. In Corynebacterium efficiens (strain DSM 44549 / YS-314 / AJ 12310 / JCM 11189 / NBRC 100395), this protein is Error-prone DNA polymerase.